The chain runs to 194 residues: Holliday junction branch migration complex subunit RuvA (194 aa).

Positions 1-64 are domain I; the sequence is MIGRLRGILA…EDSVSLYGFL (64 aa). Residues 65-140 form a domain II region; that stretch reads REGERRLFRD…RAADFSSGAP (76 aa). A flexible linker region spans residues 140–144; it reads PITGQ. Positions 145–194 are domain III; it reads LGPDAISEATVALQQLGYKPAEAARMARDAGAEGGEVATVIRKALQAALR.

Belongs to the RuvA family. As to quaternary structure, homotetramer. Forms an RuvA(8)-RuvB(12)-Holliday junction (HJ) complex. HJ DNA is sandwiched between 2 RuvA tetramers; dsDNA enters through RuvA and exits via RuvB. An RuvB hexamer assembles on each DNA strand where it exits the tetramer. Each RuvB hexamer is contacted by two RuvA subunits (via domain III) on 2 adjacent RuvB subunits; this complex drives branch migration. In the full resolvosome a probable DNA-RuvA(4)-RuvB(12)-RuvC(2) complex forms which resolves the HJ.

The protein resides in the cytoplasm. The RuvA-RuvB-RuvC complex processes Holliday junction (HJ) DNA during genetic recombination and DNA repair, while the RuvA-RuvB complex plays an important role in the rescue of blocked DNA replication forks via replication fork reversal (RFR). RuvA specifically binds to HJ cruciform DNA, conferring on it an open structure. The RuvB hexamer acts as an ATP-dependent pump, pulling dsDNA into and through the RuvAB complex. HJ branch migration allows RuvC to scan DNA until it finds its consensus sequence, where it cleaves and resolves the cruciform DNA. The polypeptide is Holliday junction branch migration complex subunit RuvA (Xanthomonas oryzae pv. oryzae (strain MAFF 311018)).